Consider the following 307-residue polypeptide: Cytidine deaminase 7 (307 aa).

CMP/dCMP-type deaminase domains lie at 22–155 (TEPI…FTPD) and 185–307 (SDCS…FITE). Substrate is bound at residue 63–65 (NVE). Residue His76 coordinates Zn(2+). Residue Glu78 is the Proton donor of the active site. The Zn(2+) site is built by Cys111 and Cys114.

This sequence belongs to the cytidine and deoxycytidylate deaminase family. Homodimer. It depends on Zn(2+) as a cofactor.

It carries out the reaction cytidine + H2O + H(+) = uridine + NH4(+). The catalysed reaction is 2'-deoxycytidine + H2O + H(+) = 2'-deoxyuridine + NH4(+). Functionally, this enzyme scavenges exogenous and endogenous cytidine and 2'-deoxycytidine for UMP synthesis. In Arabidopsis thaliana (Mouse-ear cress), this protein is Cytidine deaminase 7 (CDA7).